Consider the following 252-residue polypeptide: 3-deoxy-manno-octulosonate cytidylyltransferase (252 aa).

It belongs to the KdsB family.

The protein localises to the cytoplasm. It catalyses the reaction 3-deoxy-alpha-D-manno-oct-2-ulosonate + CTP = CMP-3-deoxy-beta-D-manno-octulosonate + diphosphate. It participates in nucleotide-sugar biosynthesis; CMP-3-deoxy-D-manno-octulosonate biosynthesis; CMP-3-deoxy-D-manno-octulosonate from 3-deoxy-D-manno-octulosonate and CTP: step 1/1. The protein operates within bacterial outer membrane biogenesis; lipopolysaccharide biosynthesis. In terms of biological role, activates KDO (a required 8-carbon sugar) for incorporation into bacterial lipopolysaccharide in Gram-negative bacteria. This Vibrio cholerae serotype O1 (strain ATCC 39315 / El Tor Inaba N16961) protein is 3-deoxy-manno-octulosonate cytidylyltransferase.